Here is a 312-residue protein sequence, read N- to C-terminus: MRNHTEITEFILLGLTDDPNFQVVIFVFLLITYMLSITGNLTLITITLLDSHLQTPMYFFLRNFSILEISFTTVSIPKFLGNIISGDKTISFNNCIVQLFFFILLGVTEFYLLAAMSYDRYVAICKPLHCLSIMNRRVCTLLVFTSWLVSFLIIFPALMLLLKLHYCRSNIIDHFTCDYFPLLQLACSDTKFLEVMGFSCAAFTLMFTLALIFLSYIYIIRTILRIPSTSQRTKAFSTCSSHMVVVSISYGSCIFMYIKPSAKDRVSLSKGVAILNTSVAPMMNPFIYSLRNQQVKQAFINMARKTVFFTST.

The Extracellular portion of the chain corresponds to 1–23 (MRNHTEITEFILLGLTDDPNFQV). A glycan (N-linked (GlcNAc...) asparagine) is linked at Asn3. The chain crosses the membrane as a helical span at residues 24-44 (VIFVFLLITYMLSITGNLTLI). Over 45–52 (TITLLDSH) the chain is Cytoplasmic. A helical transmembrane segment spans residues 53–73 (LQTPMYFFLRNFSILEISFTT). Residues 74-97 (VSIPKFLGNIISGDKTISFNNCIV) lie on the Extracellular side of the membrane. A disulfide bridge connects residues Cys95 and Cys187. The chain crosses the membrane as a helical span at residues 98–118 (QLFFFILLGVTEFYLLAAMSY). At 119–137 (DRYVAICKPLHCLSIMNRR) the chain is on the cytoplasmic side. Residues 138-158 (VCTLLVFTSWLVSFLIIFPAL) form a helical membrane-spanning segment. Topologically, residues 159–195 (MLLLKLHYCRSNIIDHFTCDYFPLLQLACSDTKFLEV) are extracellular. Residues 196-215 (MGFSCAAFTLMFTLALIFLS) form a helical membrane-spanning segment. At 216-235 (YIYIIRTILRIPSTSQRTKA) the chain is on the cytoplasmic side. The chain crosses the membrane as a helical span at residues 236-256 (FSTCSSHMVVVSISYGSCIFM). The Extracellular segment spans residues 257 to 269 (YIKPSAKDRVSLS). A helical membrane pass occupies residues 270–290 (KGVAILNTSVAPMMNPFIYSL). Residues 291–312 (RNQQVKQAFINMARKTVFFTST) are Cytoplasmic-facing.

Belongs to the G-protein coupled receptor 1 family.

It is found in the cell membrane. In terms of biological role, odorant receptor. The sequence is that of Olfactory receptor 6C1 (OR6C1) from Homo sapiens (Human).